Reading from the N-terminus, the 221-residue chain is Small ribosomal subunit protein uS3c (221 aa).

The KH type-2 domain maps to 39–109; sequence LRDYLKTRLA…RVIVHVVEIA (71 aa).

Belongs to the universal ribosomal protein uS3 family. As to quaternary structure, part of the 30S ribosomal subunit.

The protein localises to the plastid. It localises to the chloroplast. The chain is Small ribosomal subunit protein uS3c (rps3) from Nephroselmis olivacea (Green alga).